We begin with the raw amino-acid sequence, 514 residues long: Anthranilate synthase component 1 (514 aa).

L-tryptophan-binding positions include threonine 40 and proline 290 to methionine 292. Residue glycine 327–threonine 328 coordinates chorismate. Glutamate 360 contacts Mg(2+). Residues tyrosine 448, arginine 468, glycine 482–glycine 484, and glycine 484 contribute to the chorismate site. Glutamate 497 is a Mg(2+) binding site.

This sequence belongs to the anthranilate synthase component I family. Heterotetramer consisting of two non-identical subunits: a beta subunit (TrpG) and a large alpha subunit (TrpE). The cofactor is Mg(2+).

It carries out the reaction chorismate + L-glutamine = anthranilate + pyruvate + L-glutamate + H(+). The protein operates within amino-acid biosynthesis; L-tryptophan biosynthesis; L-tryptophan from chorismate: step 1/5. Its activity is regulated as follows. Feedback inhibited by tryptophan. In terms of biological role, part of a heterotetrameric complex that catalyzes the two-step biosynthesis of anthranilate, an intermediate in the biosynthesis of L-tryptophan. In the first step, the glutamine-binding beta subunit (TrpG) of anthranilate synthase (AS) provides the glutamine amidotransferase activity which generates ammonia as a substrate that, along with chorismate, is used in the second step, catalyzed by the large alpha subunit of AS (TrpE) to produce anthranilate. In the absence of TrpG, TrpE can synthesize anthranilate directly from chorismate and high concentrations of ammonia. This Buchnera aphidicola subsp. Rhopalosiphum padi protein is Anthranilate synthase component 1 (trpE).